The chain runs to 994 residues: Integrator complex subunit 5 (994 aa).

The interval 559-586 (NSNNNNELCNGKDYGKRTKLEPGEDKVD) is disordered. A compositionally biased stretch (basic and acidic residues) spans 571-583 (DYGKRTKLEPGED). Transmembrane regions (helical) follow at residues 769-786 (YSLV…DVMY) and 810-826 (AFIN…LIAG).

The protein belongs to the Integrator subunit 5 family. Belongs to the multiprotein complex Integrator, at least composed of IntS1, IntS2, IntS3, IntS4, omd/IntS5, IntS6, defl/IntS7, IntS8, IntS9, IntS10, IntS11, IntS12, asun/IntS13, IntS14 and IntS15. The core complex associates with protein phosphatase 2A subunits mts/PP2A and Pp2A-29B, to form the Integrator-PP2A (INTAC) complex.

It localises to the nucleus membrane. The protein localises to the nucleus. The protein resides in the cytoplasm. Its function is as follows. Component of the integrator complex, a multiprotein complex that terminates RNA polymerase II (Pol II) transcription in the promoter-proximal region of genes. The integrator complex provides a quality checkpoint during transcription elongation by driving premature transcription termination of transcripts that are unfavorably configured for transcriptional elongation: the complex terminates transcription by (1) catalyzing dephosphorylation of the C-terminal domain (CTD) of Pol II subunit Polr2A/Rbp1 and Spt5, and (2) degrading the exiting nascent RNA transcript via endonuclease activity. The integrator complex is also involved in the 3'-end processing of the U7 snRNA, and also the spliceosomal snRNAs U1, U2, U4 and U5. The protein is Integrator complex subunit 5 of Drosophila melanogaster (Fruit fly).